The primary structure comprises 503 residues: MALAPERAAPRVLFGEWLLGEISSGCYEGLQWLDEARTCFRVPWKHFARKDLSEADARIFKAWAVARGRWPPSSRGGGPPPEAETAERAGWKTNFRCALRSTRRFVMLRDNSGDPADPHKVYALSRELCWREGPGTDQTEAEAPAAVPPPQGGPPGPFLAHTHAGLQAPGPLPAPAGDKGDLLLQAVQQSCLADHLLTASWGADPVPTKAPGEGQEGLPLTGACAGGPGLPAGELYGWAVETTPSPGPQPAALTTGEAAAPESPHQAEPYLSPSPSACTAVQEPSPGALDVTIMYKGRTVLQKVVGHPSCTFLYGPPDPAVRATDPQQVAFPSPAELPDQKQLRYTEELLRHVAPGLHLELRGPQLWARRMGKCKVYWEVGGPPGSASPSTPACLLPRNCDTPIFDFRVFFQELVEFRARQRRGSPRYTIYLGFGQDLSAGRPKEKSLVLVKLEPWLCRVHLEGTQREGVSSLDSSSLSLCLSSANSLYDDIECFLMELEQPA.

A DNA-binding region (IRF tryptophan pentad repeat) is located at residues 11-126; it reads RVLFGEWLLG…DPHKVYALSR (116 aa). The disordered stretch occupies residues 69-88; that stretch reads RWPPSSRGGGPPPEAETAER. Position 92 is an N6-acetyllysine; by KAT2A and KAT2B (K92). Disordered stretches follow at residues 133-156 and 242-277; these read GPGTDQTEAEAPAAVPPPQGGPPG and TTPSPGPQPAALTTGEAAAPESPHQAEPYLSPSPSA. The segment covering 146-156 has biased composition (pro residues); it reads AVPPPQGGPPG. The interval 284 to 456 is necessary for the interaction with NMI; that stretch reads PSPGALDVTI…SLVLVKLEPW (173 aa). K375 participates in a covalent cross-link: Glycyl lysine isopeptide (Lys-Gly) (interchain with G-Cter in ubiquitin). Residues K444 and K446 each participate in a glycyl lysine isopeptide (Lys-Gly) (interchain with G-Cter in SUMO) cross-link. Phosphoserine is present on residues S471, S472, and S475. Residues S477 and S479 each carry the phosphoserine; by TBK1 and IKKE modification. Phosphoserine is present on residues S483, S484, and S487.

Belongs to the IRF family. Monomer. Homodimer; phosphorylation-induced. Heterodimer with IRF3. Interacts with TICAM1 and TICAM2. Interacts with MYD88 and TRAF6. Interacts with TRIM35. Interacts with NMI; the interaction is direct and leads to the inhibition of IRF7-mediated type I IFN production. Interacts with GBP4; preventing interaction between TRAF6 and IRF7, resulting in impaired TRAF6-mediated IRF7 ubiquitination. In terms of assembly, (Microbial infection) Interacts with Epstein-Barr virus LF2 and LMP1. As to quaternary structure, (Microbial infection) Interacts with rotavirus A NSP1; this interaction leads to the proteasome-dependent degradation of IRF7. (Microbial infection) Interacts with human herpes virus 8/HHV-8 proteins ORF45 and vIRF-1. In terms of assembly, (Microbial infection) Interacts with human T-cell leukemia virus 1/HTLV-1 protein HBZ. As to quaternary structure, (Microbial infection) Interacts with Seneca Valley virus protease 3C; this interaction is involved in the suppression of IRF7 expression and phosphorylation by the virus. (Microbial infection) Interacts with ebolavirus VP35; this interaction mediates the sumoylation of IRF7 and contributes to the viral inhibition of IFN-type I production. In terms of assembly, (Microbial infection) Interacts with severe fever with thrombocytopenia syndrome virus (SFTSV) NSs; this interaction sequesters IRF7 in NSs-induced cytoplasmic inclusion bodies. As to quaternary structure, (Microbial infection) Interacts with herpes virus 8/HHV-8 protein vIRF-4; this interaction prevents IRF7 dimerization and subsequent activation. (Microbial infection) Interacts with human metapneumovirus protein M2-2; this interaction prevents IRF7 phosphorlyation and subsequent TLR7/9-dependent IFN-alpha induction. Acetylation inhibits its DNA-binding ability and activity. In terms of processing, in response to a viral infection, phosphorylated on Ser-477 and Ser-479 by TBK1 and IKBKE1. Phosphorylation, and subsequent activation is inhibited by vaccinia virus protein E3. In TLR7- and TLR9-mediated signaling pathway, phosphorylated by IRAK1. Post-translationally, TRAF6-mediated ubiquitination is required for IRF7 activation. TRIM35 mediates IRF7 'Lys-48'-linked polyubiquitination and subsequent proteasomal degradation. Ubiquitinated by UBE3C, leading to its degradation. Sumoylated by TRIM28, which inhibits its transactivation activity. In terms of processing, (Microbial infection) Cleaved and inactivated by the protease 3C of enterovirus 71 allowing the virus to disrupt the host type I interferon production. Post-translationally, (Microbial infection) Cleaved and inactivated by the protease 3C of human enterovirus 68D (EV68) allowing the virus to disrupt the host type I interferon production. 'Lys-48'-linked polyubiquitination and subsequent proteasomal degradation is NMI-dependent in response to Sendai virus infection. In terms of processing, 'Lys-63'-linked ubiquitination by NEURL3 promotes IRF7 activation. Expressed predominantly in spleen, thymus and peripheral blood leukocytes.

The protein localises to the nucleus. It localises to the cytoplasm. In the absence of viral infection, maintained as a monomer in an autoinhibited state and phosphorylation disrupts this autoinhibition leading to the liberation of the DNA-binding and dimerization activities and its nuclear localization where it can activate type I IFN and ISG genes. In terms of biological role, key transcriptional regulator of type I interferon (IFN)-dependent immune responses and plays a critical role in the innate immune response against DNA and RNA viruses. Regulates the transcription of type I IFN genes (IFN-alpha and IFN-beta) and IFN-stimulated genes (ISG) by binding to an interferon-stimulated response element (ISRE) in their promoters. Can efficiently activate both the IFN-beta (IFNB) and the IFN-alpha (IFNA) genes and mediate their induction via both the virus-activated, MyD88-independent pathway and the TLR-activated, MyD88-dependent pathway. Induces transcription of ubiquitin hydrolase USP25 mRNA in response to lipopolysaccharide (LPS) or viral infection in a type I IFN-dependent manner. Required during both the early and late phases of the IFN gene induction but is more critical for the late than for the early phase. Exists in an inactive form in the cytoplasm of uninfected cells and following viral infection, double-stranded RNA (dsRNA), or toll-like receptor (TLR) signaling, becomes phosphorylated by IKBKE and TBK1 kinases. This induces a conformational change, leading to its dimerization and nuclear localization where along with other coactivators it can activate transcription of the type I IFN and ISG genes. Can also play a role in regulating adaptive immune responses by inducing PSMB9/LMP2 expression, either directly or through induction of IRF1. Binds to the Q promoter (Qp) of EBV nuclear antigen 1 a (EBNA1) and may play a role in the regulation of EBV latency. Can activate distinct gene expression programs in macrophages and regulate the anti-tumor properties of primary macrophages. The sequence is that of Interferon regulatory factor 7 (IRF7) from Homo sapiens (Human).